The following is a 260-amino-acid chain: Acetylglutamate kinase (260 aa).

Residues 46–47, Arg-68, and Asn-160 contribute to the substrate site; that span reads GG.

It belongs to the acetylglutamate kinase family. ArgB subfamily.

The protein resides in the cytoplasm. The catalysed reaction is N-acetyl-L-glutamate + ATP = N-acetyl-L-glutamyl 5-phosphate + ADP. It participates in amino-acid biosynthesis; L-arginine biosynthesis; N(2)-acetyl-L-ornithine from L-glutamate: step 2/4. Its function is as follows. Catalyzes the ATP-dependent phosphorylation of N-acetyl-L-glutamate. The polypeptide is Acetylglutamate kinase (Shewanella baltica (strain OS223)).